A 143-amino-acid chain; its full sequence is Sirohydrochlorin cobaltochelatase (143 aa).

His9 acts as the Proton acceptor in catalysis. His9 serves as a coordination point for Co(2+). Position 9 (His9) interacts with Ni(2+). Substrate contacts are provided by residues Glu45 and 70–75 (LAHGNH). A Co(2+)-binding site is contributed by His75. His75 serves as a coordination point for Ni(2+).

The protein belongs to the CbiX family. CbiXS subfamily. In terms of assembly, homotetramer; dimer of dimers.

The enzyme catalyses Co-sirohydrochlorin + 2 H(+) = sirohydrochlorin + Co(2+). The catalysed reaction is Ni-sirohydrochlorin + 2 H(+) = sirohydrochlorin + Ni(2+). The protein operates within cofactor biosynthesis; adenosylcobalamin biosynthesis; cob(II)yrinate a,c-diamide from sirohydrochlorin (anaerobic route): step 1/10. Functionally, catalyzes the insertion of Co(2+) into sirohydrochlorin as part of the anaerobic pathway to cobalamin biosynthesis. Involved in the biosynthesis of the unique nickel-containing tetrapyrrole coenzyme F430, the prosthetic group of methyl-coenzyme M reductase (MCR), which plays a key role in methanogenesis and anaerobic methane oxidation. Catalyzes the insertion of Ni(2+) into sirohydrochlorin to yield Ni-sirohydrochlorin. The sequence is that of Sirohydrochlorin cobaltochelatase from Methanococcus aeolicus (strain ATCC BAA-1280 / DSM 17508 / OCM 812 / Nankai-3).